Consider the following 602-residue polypeptide: MSESDTTDAGDGTALRTPIVAVLGHVDHGKTSLLDEVRGSAVTAGEAGAITQHIGATAVPLDTISELAGQLVSPEDFDLPGLLFIDTPGHHSFSTLRSRGGALADIAILVVDVNDGFQPQSYEALDILKRTQTPFIVAANKIDTVPGWNPNPDEPVQRTLEAQSDRAESRLNEQLYEIIGELSDEGFSADMYWRVQNFRENIGVVPVSAETGEGVPDLLTVLMGLSQRYLKEEMSIDVGGPGVGTVLEVKEERGFGTTLDIVLYDGTIRADDTIVVGGKNETIVTDVRALLQPQPLAEIRTEKQFEQVEAVGAAAGIKIAAPDLDDAMAGAPVRVVRDRPVEEVIAEVEAELADIQVVTEEEGIVVKADTLGSLEAIAAALEEAEIPIVRAEVGDVAPRDIAVASTAEEPKHEAVLAFNVDVLDDAEREAEEKDVKLFADDVIYQLVEEYDDYVTEIEEAQQEQILDKIERPCRFRVLKDHVFRQSNPAVVGVEVLSGTLKRNSRVVKWDGNEPERVGELKSLQDAGDDIDEARTGEQVAASIDGPTVGRQIEEGDELWAEVPEKHAKILEQELADEIPTDELEALRMYLDKQRKRDPFWGK.

The 216-residue stretch at 15–230 folds into the tr-type G domain; it reads LRTPIVAVLG…VLMGLSQRYL (216 aa). The interval 24–31 is G1; the sequence is GHVDHGKT. GTP is bound at residue 24–31; it reads GHVDHGKT. Positions 49-53 are G2; it reads AITQH. The tract at residues 86–89 is G3; it reads DTPG. GTP-binding positions include 86-90 and 140-143; these read DTPGH and NKID. Positions 140-143 are G4; that stretch reads NKID. Residues 208-210 are G5; sequence SAE.

The protein belongs to the TRAFAC class translation factor GTPase superfamily. Classic translation factor GTPase family. IF-2 subfamily.

Function in general translation initiation by promoting the binding of the formylmethionine-tRNA to ribosomes. Seems to function along with eIF-2. The chain is Probable translation initiation factor IF-2 from Natronomonas pharaonis (strain ATCC 35678 / DSM 2160 / CIP 103997 / JCM 8858 / NBRC 14720 / NCIMB 2260 / Gabara) (Halobacterium pharaonis).